The primary structure comprises 157 residues: Phosphomannomutase (157 aa).

S98 (phosphoserine intermediate) is an active-site residue. Residue S98 coordinates Mg(2+).

It belongs to the phosphohexose mutase family. Mg(2+) is required as a cofactor.

It catalyses the reaction alpha-D-mannose 1-phosphate = D-mannose 6-phosphate. It functions in the pathway nucleotide-sugar biosynthesis; GDP-alpha-D-mannose biosynthesis; alpha-D-mannose 1-phosphate from D-fructose 6-phosphate: step 2/2. The protein operates within capsule biogenesis; capsule polysaccharide biosynthesis. Involved in the biosynthesis of the K2 capsular polysaccharide biosynthesis. The sequence is that of Phosphomannomutase (manB) from Klebsiella pneumoniae.